A 297-amino-acid chain; its full sequence is Aspartate carbamoyltransferase catalytic subunit (297 aa).

Residues Arg-49 and Thr-50 each contribute to the carbamoyl phosphate site. L-aspartate is bound at residue Lys-77. Carbamoyl phosphate-binding residues include Arg-99, His-129, and Gln-132. 2 residues coordinate L-aspartate: Arg-162 and Arg-215. Carbamoyl phosphate contacts are provided by Gly-256 and Pro-257.

It belongs to the aspartate/ornithine carbamoyltransferase superfamily. ATCase family. In terms of assembly, heterododecamer (2C3:3R2) of six catalytic PyrB chains organized as two trimers (C3), and six regulatory PyrI chains organized as three dimers (R2).

The enzyme catalyses carbamoyl phosphate + L-aspartate = N-carbamoyl-L-aspartate + phosphate + H(+). It participates in pyrimidine metabolism; UMP biosynthesis via de novo pathway; (S)-dihydroorotate from bicarbonate: step 2/3. Catalyzes the condensation of carbamoyl phosphate and aspartate to form carbamoyl aspartate and inorganic phosphate, the committed step in the de novo pyrimidine nucleotide biosynthesis pathway. This Legionella pneumophila subsp. pneumophila (strain Philadelphia 1 / ATCC 33152 / DSM 7513) protein is Aspartate carbamoyltransferase catalytic subunit.